Reading from the N-terminus, the 235-residue chain is Large ribosomal subunit protein uL1 (235 aa).

The protein belongs to the universal ribosomal protein uL1 family. As to quaternary structure, part of the 50S ribosomal subunit.

Its function is as follows. Binds directly to 23S rRNA. The L1 stalk is quite mobile in the ribosome, and is involved in E site tRNA release. Functionally, protein L1 is also a translational repressor protein, it controls the translation of the L11 operon by binding to its mRNA. The polypeptide is Large ribosomal subunit protein uL1 (Blochmanniella floridana).